Here is a 776-residue protein sequence, read N- to C-terminus: Microtubule-associated protein tau (776 aa).

The span at 1-26 (MAEPRQEFDVMEDHAGTYGLGDRKDQ) shows a compositional bias: basic and acidic residues. A disordered region spans residues 1–591 (MAEPRQEFDV…PVPMPDLKNV (591 aa)). Residue Ala-2 is modified to N-acetylalanine. Phosphotyrosine occurs at positions 18 and 29. A Glycyl lysine isopeptide (Lys-Gly) (interchain with G-Cter in ubiquitin) cross-link involves residue Lys-44. Phosphoserine occurs at positions 46 and 61. The span at 61–71 (SETSDAKSTPT) shows a compositional bias: polar residues. Residues Thr-69, Thr-71, and Thr-111 each carry the phosphothreonine modification. 2 stretches are compositionally biased toward basic and acidic residues: residues 179–189 (EGGRHAPELLK) and 207–216 (GGKERPGIKE). The segment covering 217–228 (EVDEDRDVDESS) has biased composition (acidic residues). Positions 314-323 (EQAHSEEHLG) are enriched in basic and acidic residues. Low complexity predominate over residues 325–340 (AAFPGAPGEGPEAQGP). Composition is skewed to basic and acidic residues over residues 344–356 (EDTK…EPSE) and 381–393 (KSKD…DKKA). A compositionally biased stretch (low complexity) spans 442 to 453 (VSSVTXRTGSSG). Over residues 455 to 466 (KEMKLKGADGKT) the composition is skewed to basic and acidic residues. Thr-470 is subject to Phosphothreonine. The residue at position 472 (Arg-472) is an Omega-N-methylarginine. Lys-480 carries the post-translational modification N6,N6-dimethyllysine; alternate. The residue at position 480 (Lys-480) is an N6-acetyllysine; alternate. Thr-486, Thr-492, and Thr-498 each carry phosphothreonine. Ser-502, Ser-526, and Ser-530 each carry phosphoserine. The segment covering 517–528 (KSERGEPPKSGD) has biased composition (basic and acidic residues). The span at 529-549 (RSGYSSPGSPGTPGSRSRTPS) shows a compositional bias: low complexity. The residue at position 532 (Tyr-532) is a Phosphotyrosine. Phosphoserine occurs at positions 533, 534, and 537. 2 positions are modified to phosphothreonine: Thr-540 and Thr-547. Ser-549 bears the Phosphoserine mark. Residue Thr-552 is modified to Phosphothreonine. The residue at position 560 (Lys-560) is an N6-acetyllysine. Thr-566 is subject to Phosphothreonine. Phosphoserine is present on residues Ser-570 and Ser-572. 4 Tau/MAP repeats span residues 579–609 (QTAP…GGGK), 610–640 (VQII…GGGS), 641–671 (VQIV…GGGQ), and 672–703 (VEVK…GGGN). A Glycyl lysine isopeptide (Lys-Gly) (interchain with G-Cter in ubiquitin) cross-link involves residue Lys-589. An N6-acetyllysine; alternate modification is found at Lys-594. Lys-594 bears the N6-methyllysine; alternate mark. A Glycyl lysine isopeptide (Lys-Gly) (interchain with G-Cter in ubiquitin); alternate cross-link involves residue Lys-594. The residue at position 597 (Ser-597) is a Phosphoserine. Lys-602 participates in a covalent cross-link: Glycyl lysine isopeptide (Lys-Gly) (interchain with G-Cter in ubiquitin). Residue Lys-616 is modified to N6-acetyllysine; alternate. Residue Lys-616 forms a Glycyl lysine isopeptide (Lys-Gly) (interchain with G-Cter in ubiquitin); alternate linkage. Ser-620 and Ser-624 each carry phosphoserine. Lys-625 carries the N6-acetyllysine modification. A Phosphoserine modification is found at Ser-628. At Lys-633 the chain carries N6-acetyllysine; alternate. A Glycyl lysine isopeptide (Lys-Gly) (interchain with G-Cter in ubiquitin); alternate cross-link involves residue Lys-633. At Ser-640 the chain carries Phosphoserine. Residue Lys-646 is modified to N6,N6-dimethyllysine; alternate. N6-acetyllysine; alternate occurs at positions 646, 652, and 656. Glycyl lysine isopeptide (Lys-Gly) (interchain with G-Cter in ubiquitin); alternate cross-links involve residues Lys-646, Lys-652, and Lys-656. Phosphoserine is present on Ser-659. N6-acetyllysine; alternate is present on residues Lys-666, Lys-678, and Lys-682. Residues Lys-666, Lys-678, and Lys-682 each participate in a glycyl lysine isopeptide (Lys-Gly) (interchain with G-Cter in ubiquitin); alternate cross-link. Arg-684 is subject to Omega-N-methylarginine. Ser-687 bears the Phosphoserine mark. A Glycyl lysine isopeptide (Lys-Gly) (interchain with G-Cter in ubiquitin) cross-link involves residue Lys-688. Ser-691 carries the phosphoserine modification. Lys-704 is subject to N6-acetyllysine; alternate. A Glycyl lysine isopeptide (Lys-Gly) (interchain with G-Cter in ubiquitin); alternate cross-link involves residue Lys-704. Residue Lys-710 forms a Glycyl lysine isopeptide (Lys-Gly) (interchain with G-Cter in ubiquitin) linkage. The residue at position 720 (Lys-720) is an N6-acetyllysine; alternate. Residue Lys-720 forms a Glycyl lysine isopeptide (Lys-Gly) (interchain with G-Cter in ubiquitin); alternate linkage. Tyr-729 is modified (phosphotyrosine). Residues Ser-731 and Ser-735 each carry the phosphoserine modification. A disordered region spans residues 733–752 (VVSGDTSPRHLSNVSSTGSI). Over residues 736 to 751 (GDTSPRHLSNVSSTGS) the composition is skewed to polar residues. Residue Thr-738 is modified to Phosphothreonine. Ser-739, Ser-744, Ser-751, and Ser-757 each carry phosphoserine. Thr-762 bears the Phosphothreonine mark.

Interacts with MARK1, MARK2, MARK3 and MARK4. Interacts with SQSTM1 when polyubiquitinated. Interacts with PSMC2 through SQSTM1. Interacts with FKBP4. Binds to CSNK1D. Interacts with SGK1. Interacts with EPM2A; the interaction dephosphorylates MAPT at Ser-396. Interacts with PIN1. Interacts with LRRK2. Interacts with LRP1, leading to endocytosis; this interaction is reduced in the presence of LRPAP1/RAP. Post-translationally, polyubiquitinated. Requires functional TRAF6 and may provoke SQSTM1-dependent degradation by the proteasome. Phosphorylation at various serine and threonine residues in S-P or T-P motifs by proline-directed protein kinases (PDPK1, CDK1, CDK5, GSK3, MAPK) (a few sites per protein in interphase, more in mitosis), and at serine residues in K-X-G-S motifs by MAP/microtubule affinity-regulating kinase (MARK1, MARK2, MARK3 or MARK4), causing detachment from microtubules, and their disassembly. Phosphorylation at Ser-597 by BRSK1 and BRSK2 in neurons affects ability to bind microtubules and plays a role in neuron polarization. Phosphorylated by PHK. Dephosphorylation at several serine and threonine residues by the serine/threonine phosphatase PPP5C.

The protein resides in the cytoplasm. Its subcellular location is the cytosol. The protein localises to the cell membrane. It is found in the cytoskeleton. It localises to the cell projection. The protein resides in the axon. Its subcellular location is the dendrite. Promotes microtubule assembly and stability, and might be involved in the establishment and maintenance of neuronal polarity. The C-terminus binds axonal microtubules while the N-terminus binds neural plasma membrane components, suggesting that tau functions as a linker protein between both. Axonal polarity is predetermined by tau localization (in the neuronal cell) in the domain of the cell body defined by the centrosome. The short isoforms allow plasticity of the cytoskeleton whereas the longer isoforms may preferentially play a role in its stabilization. The sequence is that of Microtubule-associated protein tau (MAPT) from Hylobates lar (Lar gibbon).